We begin with the raw amino-acid sequence, 224 residues long: tRNA (guanine-N(7)-)-methyltransferase (224 aa).

E57, D82, and D109 together coordinate S-adenosyl-L-methionine. D167 contacts substrate.

Belongs to the class I-like SAM-binding methyltransferase superfamily. TrmB family.

The catalysed reaction is guanosine(46) in tRNA + S-adenosyl-L-methionine = N(7)-methylguanosine(46) in tRNA + S-adenosyl-L-homocysteine. It functions in the pathway tRNA modification; N(7)-methylguanine-tRNA biosynthesis. In terms of biological role, catalyzes the formation of N(7)-methylguanine at position 46 (m7G46) in tRNA. The sequence is that of tRNA (guanine-N(7)-)-methyltransferase from Chloroflexus aggregans (strain MD-66 / DSM 9485).